A 542-amino-acid polypeptide reads, in one-letter code: uncharacterized protein (542 aa).

The next 12 helical transmembrane spans lie at 12 to 32 (LVFG…GTVL), 57 to 77 (FGDV…AILY), 94 to 114 (VIVM…SWTA), 123 to 143 (AAAV…AGLA), 168 to 188 (LFAV…AALV), 191 to 211 (FVVS…LVTL), 216 to 236 (IDAP…AFLL), 243 to 263 (SGVV…PTVI), 277 to 297 (IATF…IPGA), 313 to 333 (VLAL…VQAT), 358 to 378 (VTSW…AVPM), and 391 to 411 (LIIF…GTSL).

Belongs to the monovalent cation:proton antiporter 1 (CPA1) transporter (TC 2.A.36) family.

The protein localises to the cell membrane. This is an uncharacterized protein from Mycobacterium bovis (strain ATCC BAA-935 / AF2122/97).